The following is a 271-amino-acid chain: Formamidopyrimidine-DNA glycosylase (271 aa).

Residue Pro2 is the Schiff-base intermediate with DNA of the active site. Glu3 functions as the Proton donor in the catalytic mechanism. Lys58 acts as the Proton donor; for beta-elimination activity in catalysis. His91, Arg110, and Arg152 together coordinate DNA. The FPG-type zinc finger occupies 237–271; the sequence is RVYGRTGLACMACETPVKQIVQGNRSTYYCPACQR. Arg261 (proton donor; for delta-elimination activity) is an active-site residue.

Belongs to the FPG family. In terms of assembly, monomer. Zn(2+) serves as cofactor.

It carries out the reaction Hydrolysis of DNA containing ring-opened 7-methylguanine residues, releasing 2,6-diamino-4-hydroxy-5-(N-methyl)formamidopyrimidine.. The catalysed reaction is 2'-deoxyribonucleotide-(2'-deoxyribose 5'-phosphate)-2'-deoxyribonucleotide-DNA = a 3'-end 2'-deoxyribonucleotide-(2,3-dehydro-2,3-deoxyribose 5'-phosphate)-DNA + a 5'-end 5'-phospho-2'-deoxyribonucleoside-DNA + H(+). In terms of biological role, involved in base excision repair of DNA damaged by oxidation or by mutagenic agents. Acts as a DNA glycosylase that recognizes and removes damaged bases. Has a preference for oxidized purines, such as 7,8-dihydro-8-oxoguanine (8-oxoG). Has AP (apurinic/apyrimidinic) lyase activity and introduces nicks in the DNA strand. Cleaves the DNA backbone by beta-delta elimination to generate a single-strand break at the site of the removed base with both 3'- and 5'-phosphates. The polypeptide is Formamidopyrimidine-DNA glycosylase (Thioalkalivibrio sulfidiphilus (strain HL-EbGR7)).